The primary structure comprises 189 residues: Peptidyl-tRNA hydrolase (189 aa).

Tyr-15 provides a ligand contact to tRNA. His-20 serves as the catalytic Proton acceptor. Tyr-65, Asn-67, and Asn-113 together coordinate tRNA.

This sequence belongs to the PTH family. As to quaternary structure, monomer.

It localises to the cytoplasm. It carries out the reaction an N-acyl-L-alpha-aminoacyl-tRNA + H2O = an N-acyl-L-amino acid + a tRNA + H(+). Functionally, hydrolyzes ribosome-free peptidyl-tRNAs (with 1 or more amino acids incorporated), which drop off the ribosome during protein synthesis, or as a result of ribosome stalling. Catalyzes the release of premature peptidyl moieties from peptidyl-tRNA molecules trapped in stalled 50S ribosomal subunits, and thus maintains levels of free tRNAs and 50S ribosomes. This is Peptidyl-tRNA hydrolase from Caldicellulosiruptor bescii (strain ATCC BAA-1888 / DSM 6725 / KCTC 15123 / Z-1320) (Anaerocellum thermophilum).